Here is a 291-residue protein sequence, read N- to C-terminus: m-AAA protease-interacting protein 1, mitochondrial (291 aa).

A mitochondrion-targeting transit peptide spans 1-96 (MALAARLLPL…SLPASPSRSY (96 aa)).

In terms of assembly, interacts with AFG3L2. Interacts with SPG7. Interacts with SMDT1/EMRE (via the N-terminal transit peptide); interaction is direct and takes place before maturation of SMDT1/EMRE.

It is found in the mitochondrion matrix. In terms of biological role, promotes sorting of SMDT1/EMRE in mitochondria by ensuring its maturation. Interacts with the transit peptide region of SMDT1/EMRE precursor protein in the mitochondrial matrix, leading to protect it against protein degradation by YME1L1, thereby ensuring SMDT1/EMRE maturation by the mitochondrial processing peptidase (PMPCA and PMPCB). The polypeptide is m-AAA protease-interacting protein 1, mitochondrial (Mus musculus (Mouse)).